A 138-amino-acid chain; its full sequence is uncharacterized protein (138 aa).

The disordered stretch occupies residues 1–73 (MCSAGQLLGG…NHTGEPVGDD (73 aa)). The span at 7–18 (LLGGGGGGGGSG) shows a compositional bias: gly residues. Positions 19 to 29 (GERDEDRDALA) are enriched in basic and acidic residues. Residues 30 to 43 (ERAAAGTEQESGAS) show a composition bias toward low complexity. A helical membrane pass occupies residues 106 to 126 (VIVIFFWVMLWFLGLPAFGLV).

The protein belongs to the FAM241 family.

It is found in the membrane. This is an uncharacterized protein from Bos taurus (Bovine).